Consider the following 830-residue polypeptide: Ribosome biogenesis protein ERB1 (830 aa).

The interval 1–142 is disordered; sequence MAPQPLKVGT…NKDLPVDEKL (142 aa). Acidic residues-rich tracts occupy residues 35–44 and 52–109; these read VSEESDEEFG and MSDD…DSDS. The segment covering 131-142 has biased composition (basic and acidic residues); sequence EENKDLPVDEKL. WD repeat units follow at residues 481–520, 523–563, 660–698, 701–740, 744–783, and 799–830; these read PGDT…EVWR, LHAG…APHI, KTPG…LIRT, SGVK…KPYK, YHNR…DLMQ, and IDGI…LWCS.

This sequence belongs to the WD repeat BOP1/ERB1 family. Component of the NOP7 complex, composed of ERB1, NOP7 and YTM1. The complex is held together by ERB1, which interacts with NOP7 via its N-terminal domain and with YTM1 via a high-affinity interaction between the seven-bladed beta-propeller domains of the 2 proteins. The NOP7 complex associates with the 66S pre-ribosome.

It localises to the nucleus. The protein localises to the nucleolus. Its subcellular location is the nucleoplasm. Functionally, component of the NOP7 complex, which is required for maturation of the 25S and 5.8S ribosomal RNAs and formation of the 60S ribosome. This Cryptococcus neoformans var. neoformans serotype D (strain JEC21 / ATCC MYA-565) (Filobasidiella neoformans) protein is Ribosome biogenesis protein ERB1.